Consider the following 444-residue polypeptide: Signal recognition particle 54 kDa protein (444 aa).

Residues 104–111 (GLQGSGKT), 184–188 (DTAGR), and 242–245 (TKLD) each bind GTP.

The protein belongs to the GTP-binding SRP family. SRP54 subfamily. In terms of assembly, part of the signal recognition particle protein translocation system, which is composed of SRP and FtsY. Archaeal SRP consists of a 7S RNA molecule of 300 nucleotides and two protein subunits: SRP54 and SRP19.

The protein localises to the cytoplasm. It carries out the reaction GTP + H2O = GDP + phosphate + H(+). Involved in targeting and insertion of nascent membrane proteins into the cytoplasmic membrane. Binds to the hydrophobic signal sequence of the ribosome-nascent chain (RNC) as it emerges from the ribosomes. The SRP-RNC complex is then targeted to the cytoplasmic membrane where it interacts with the SRP receptor FtsY. This chain is Signal recognition particle 54 kDa protein, found in Methanothrix thermoacetophila (strain DSM 6194 / JCM 14653 / NBRC 101360 / PT) (Methanosaeta thermophila).